The primary structure comprises 173 residues: Large ribosomal subunit protein uL10 (173 aa).

It belongs to the universal ribosomal protein uL10 family. Part of the ribosomal stalk of the 50S ribosomal subunit. The N-terminus interacts with L11 and the large rRNA to form the base of the stalk. The C-terminus forms an elongated spine to which L12 dimers bind in a sequential fashion forming a multimeric L10(L12)X complex.

Functionally, forms part of the ribosomal stalk, playing a central role in the interaction of the ribosome with GTP-bound translation factors. This is Large ribosomal subunit protein uL10 from Acidithiobacillus ferrooxidans (strain ATCC 23270 / DSM 14882 / CIP 104768 / NCIMB 8455) (Ferrobacillus ferrooxidans (strain ATCC 23270)).